Here is a 750-residue protein sequence, read N- to C-terminus: MIIRSPEPEVKILVDRDPVKTSFEEWARPGHFSRTIAKGPDTTTWIWNLHADAHDFDSHTSDLEEISRKIFSAHFGQLSIIFLWLSGMYFHGARFSNYEAWLSDPTHIGPSAQVVWPIVGQEILNGDVGGGFRGIQITSGFFQIWRASGITSELQLYCTAIGALVFAALMLFAGWFHYHKAAPKLAWFQDVESMLNHHLAGLLGLGSLSWAGHQVHVSLPINQFLNAGVDPKEIPLPHEFILNRDLLAQLYPSFAEGATPFFTLNWSKYAEFLTFRGGLDPVTGGLWLTDIAHHHLAIAILFLIAGHMYKTNWGIGHSLKDILEAHKGPFTGQGHKGLYEILTTSWHAQLSLNLAMLGSLTIVVAHHMYSMPPYPYLATDYGTQLSLFTHHMWIGGFLIVGAAAHAAIFMVRDYDPTTRYNDLLDRVLRHRDAIISHLNWVCIFLGFHSFGLYIHNDTMSALGRPQDMFSDTAIQLQPVFAQWIQNTHTLAPGATAPGATASTSLTWGGGDLVAVGGKVALLPIPLGTADFLVHHIHAFTIHVTVLILLKGVLFARSSRLIPDKANLGFRFPCDGPGRGGTCQVSAWDHVFLGLFWMYNSISVVIFHFSWKMQSDVWGTISDQGVVTHITGGNFAQSSITINGWLRDFLWAQASQVIQSYGSSLSAYGLLFLGAHFVWAFSLMFLFSGRGYWQELIESIVWAHNKLKVAPATQPRALSIVQGRAVGVTHYLLGGIATTWAFFLARIIAVG.

8 helical membrane-spanning segments follow: residues 70-93, 156-179, 195-219, 291-309, 346-369, 385-411, 433-455, and 531-549; these read IFSA…FHGA, LYCT…FHYH, LNHH…HVSL, IAHH…GHMY, WHAQ…HHMY, LSLF…IFMV, AIIS…LYIH, and FLVH…LILL. Residues Cys573 and Cys582 each coordinate [4Fe-4S] cluster. The next 2 membrane-spanning stretches (helical) occupy residues 589–610 and 664–686; these read HVFL…HFSW and LSAY…MFLF. His675 lines the chlorophyll a' pocket. Residues Met683 and Tyr691 each contribute to the chlorophyll a site. Trp692 provides a ligand contact to phylloquinone. The chain crosses the membrane as a helical span at residues 724–744; it reads AVGVTHYLLGGIATTWAFFLA.

The protein belongs to the PsaA/PsaB family. As to quaternary structure, the PsaA/B heterodimer binds the P700 chlorophyll special pair and subsequent electron acceptors. PSI consists of a core antenna complex that captures photons, and an electron transfer chain that converts photonic excitation into a charge separation. The eukaryotic PSI reaction center is composed of at least 11 subunits. Requires P700 is a chlorophyll a/chlorophyll a' dimer, A0 is one or more chlorophyll a, A1 is one or both phylloquinones and FX is a shared 4Fe-4S iron-sulfur center. as cofactor.

The protein resides in the plastid. Its subcellular location is the chloroplast thylakoid membrane. It carries out the reaction reduced [plastocyanin] + hnu + oxidized [2Fe-2S]-[ferredoxin] = oxidized [plastocyanin] + reduced [2Fe-2S]-[ferredoxin]. Its function is as follows. PsaA and PsaB bind P700, the primary electron donor of photosystem I (PSI), as well as the electron acceptors A0, A1 and FX. PSI is a plastocyanin-ferredoxin oxidoreductase, converting photonic excitation into a charge separation, which transfers an electron from the donor P700 chlorophyll pair to the spectroscopically characterized acceptors A0, A1, FX, FA and FB in turn. Oxidized P700 is reduced on the lumenal side of the thylakoid membrane by plastocyanin. This Gossypium hirsutum (Upland cotton) protein is Photosystem I P700 chlorophyll a apoprotein A1.